Consider the following 175-residue polypeptide: ATP synthase subunit b (175 aa).

A helical transmembrane segment spans residues Gly-19 to Leu-35.

It belongs to the ATPase B chain family. F-type ATPases have 2 components, F(1) - the catalytic core - and F(0) - the membrane proton channel. F(1) has five subunits: alpha(3), beta(3), gamma(1), delta(1), epsilon(1). F(0) has four main subunits: a(1), b(2) and c(10-14). The alpha and beta chains form an alternating ring which encloses part of the gamma chain. F(1) is attached to F(0) by a central stalk formed by the gamma and epsilon chains, while a peripheral stalk is formed by the delta and b chains.

The protein resides in the cell inner membrane. In terms of biological role, f(1)F(0) ATP synthase produces ATP from ADP in the presence of a proton or sodium gradient. F-type ATPases consist of two structural domains, F(1) containing the extramembraneous catalytic core and F(0) containing the membrane proton channel, linked together by a central stalk and a peripheral stalk. During catalysis, ATP synthesis in the catalytic domain of F(1) is coupled via a rotary mechanism of the central stalk subunits to proton translocation. Functionally, component of the F(0) channel, it forms part of the peripheral stalk, linking F(1) to F(0). This Chlorobium phaeobacteroides (strain BS1) protein is ATP synthase subunit b.